The primary structure comprises 305 residues: N-acetylmuramic acid 6-phosphate etherase (305 aa).

A disordered region spans residues 1-24; it reads MTTPPSSPLSDPRRTEGVHPTHTD. Positions 11 to 24 are enriched in basic and acidic residues; sequence DPRRTEGVHPTHTD. In terms of domain architecture, SIS spans 62 to 225; it reads ALPRLERGGR…SSALMVRLGK (164 aa). Glu90 serves as the catalytic Proton donor. Glu121 is an active-site residue.

Belongs to the GCKR-like family. MurNAc-6-P etherase subfamily. Homodimer.

The enzyme catalyses N-acetyl-D-muramate 6-phosphate + H2O = N-acetyl-D-glucosamine 6-phosphate + (R)-lactate. It participates in amino-sugar metabolism; N-acetylmuramate degradation. Its function is as follows. Specifically catalyzes the cleavage of the D-lactyl ether substituent of MurNAc 6-phosphate, producing GlcNAc 6-phosphate and D-lactate. In Deinococcus geothermalis (strain DSM 11300 / CIP 105573 / AG-3a), this protein is N-acetylmuramic acid 6-phosphate etherase.